The chain runs to 282 residues: MEMO1 family protein Cmaq_1590 (282 aa).

This sequence belongs to the MEMO1 family.

This Caldivirga maquilingensis (strain ATCC 700844 / DSM 13496 / JCM 10307 / IC-167) protein is MEMO1 family protein Cmaq_1590.